We begin with the raw amino-acid sequence, 215 residues long: Pyrrolidone-carboxylate peptidase (215 aa).

Residues glutamate 80, cysteine 143, and histidine 167 contribute to the active site.

This sequence belongs to the peptidase C15 family. Homotetramer.

It localises to the cytoplasm. The catalysed reaction is Release of an N-terminal pyroglutamyl group from a polypeptide, the second amino acid generally not being Pro.. Its function is as follows. Removes 5-oxoproline from various penultimate amino acid residues except L-proline. In Bacillus cereus (strain ATCC 10987 / NRS 248), this protein is Pyrrolidone-carboxylate peptidase.